A 690-amino-acid chain; its full sequence is Protein hook (690 aa).

The region spanning 6–122 (MEIYESLIRW…RLLQLILGCA (117 aa)) is the Calponin-homology (CH) domain. 2 coiled-coil regions span residues 134-515 (QIME…HHAE) and 546-577 (ETTQ…QAAD).

It belongs to the hook family. In terms of assembly, homodimer. Interacts with microtubules via its N-terminus.

It localises to the cytoplasm. It is found in the cytoskeleton. Its subcellular location is the endosome. Functionally, involved in endocytic trafficking. Probably acts as a cytoskeletal linker protein that tethers endosome vesicles to the cytoskeleton. In Anopheles gambiae (African malaria mosquito), this protein is Protein hook.